The following is a 137-amino-acid chain: Basic phospholipase A2 homolog Pgo-K49 (137 aa).

Positions 1–16 (MRTLLIVAVLLVGVEG) are cleaved as a signal peptide. 7 cysteine pairs are disulfide-bonded: Cys42/Cys131, Cys44/Cys60, Cys59/Cys111, Cys65/Cys137, Cys66/Cys104, Cys73/Cys97, and Cys91/Cys102. An important for membrane-damaging activities in eukaryotes and bacteria; heparin-binding region spans residues 121 to 133 (KKYKIHMKFFCKK).

As to expression, expressed by the venom gland.

Its subcellular location is the secreted. Functionally, snake venom phospholipase A2 homolog that lacks enzymatic activity. Is myotoxic. A model of myotoxic mechanism has been proposed: an apo Lys49-PLA2 is activated by the entrance of a hydrophobic molecule (e.g. fatty acid) at the hydrophobic channel of the protein leading to a reorientation of a monomer. This reorientation causes a transition between 'inactive' to 'active' states, causing alignment of C-terminal and membrane-docking sites (MDoS) side-by-side and putting the membrane-disruption sites (MDiS) in the same plane, exposed to solvent and in a symmetric position for both monomers. The MDoS region stabilizes the toxin on membrane by the interaction of charged residues with phospholipid head groups. Subsequently, the MDiS region destabilizes the membrane with penetration of hydrophobic residues. This insertion causes a disorganization of the membrane, allowing an uncontrolled influx of ions (i.e. calcium and sodium), and eventually triggering irreversible intracellular alterations and cell death. The polypeptide is Basic phospholipase A2 homolog Pgo-K49 (Cerrophidion godmani (Porthidium godmani)).